A 280-amino-acid polypeptide reads, in one-letter code: MFIIEIFISIIYGIIEGITEWLPISSTGHLILIQDFIQFKNQSPAFMEMFNVVIQLGAILAVVVIYFDKLNPFKPGKSARQVQKTWQLWAKVVVAALPAAVIGLFLDDWFEAHFYNLVSVSVMLIVYGAAFIYLERREHEEPAVTDLASLPYKTALQIGLFQILALFPGTSRSGATIVGGLLNGVSRSVVTEFTFYLGIPIMFGASGWKILKFIKNGNGLGFGQIFLLLVAMGVAFGVSLVVIRFLTDYVKKHDFTIFGKYRIGLGGVLLVYAAIKALMG.

Helical transmembrane passes span 2-22, 45-65, 86-106, 114-134, 147-167, 188-208, 223-243, and 255-275; these read FIIEIFISIIYGIIEGITEWL, AFMEMFNVVIQLGAILAVVVI, WQLWAKVVVAALPAAVIGLFL, FYNLVSVSVMLIVYGAAFIYL, LASLPYKTALQIGLFQILALF, SVVTEFTFYLGIPIMFGASGW, GQIFLLLVAMGVAFGVSLVVI, and FTIFGKYRIGLGGVLLVYAAI.

This sequence belongs to the UppP family.

Its subcellular location is the cell membrane. It carries out the reaction di-trans,octa-cis-undecaprenyl diphosphate + H2O = di-trans,octa-cis-undecaprenyl phosphate + phosphate + H(+). Its function is as follows. Catalyzes the dephosphorylation of undecaprenyl diphosphate (UPP). Confers resistance to bacitracin. This Streptococcus sanguinis (strain SK36) protein is Undecaprenyl-diphosphatase.